We begin with the raw amino-acid sequence, 313 residues long: MTQWYPASPALWQGRDDSIEAPDARRLFQTVTRSEAFFPENWQQKIALMGFACDEGVKRNSGRPGAAGGPDALRKALANMASHQGHERLVDLGNWVAPTPDLEGAQQALRDAVSRCLRAGMRTLVMGGGHETAFGHGAGVLDAFAQESVGIINLDAHLDLRQTDRATSGTPFRQLAQLCDAQSRAFHYACFGVSRAANTQALWREAQWRNVTVVEDLDCHDALAQMTQFIDKVDKIYLTIDLDVLPVWEMPAVSAPAALGVPLIQVLRLIEPVCRSGKLQAADLVEFNPRFDEDGAAARVAARLGWQIAHWWR.

Positions 130, 155, 157, 159, 241, and 243 each coordinate Mn(2+).

Belongs to the arginase family. Mn(2+) is required as a cofactor.

The catalysed reaction is N-formimidoyl-L-glutamate + H2O = formamide + L-glutamate. It participates in amino-acid degradation; L-histidine degradation into L-glutamate; L-glutamate from N-formimidoyl-L-glutamate (hydrolase route): step 1/1. Its function is as follows. Catalyzes the conversion of N-formimidoyl-L-glutamate to L-glutamate and formamide. This Salmonella typhi protein is Formimidoylglutamase.